The chain runs to 470 residues: 3-isopropylmalate dehydratase large subunit (470 aa).

Residues C348, C409, and C412 each coordinate [4Fe-4S] cluster.

This sequence belongs to the aconitase/IPM isomerase family. LeuC type 1 subfamily. In terms of assembly, heterodimer of LeuC and LeuD. [4Fe-4S] cluster serves as cofactor.

It carries out the reaction (2R,3S)-3-isopropylmalate = (2S)-2-isopropylmalate. It participates in amino-acid biosynthesis; L-leucine biosynthesis; L-leucine from 3-methyl-2-oxobutanoate: step 2/4. Functionally, catalyzes the isomerization between 2-isopropylmalate and 3-isopropylmalate, via the formation of 2-isopropylmaleate. This is 3-isopropylmalate dehydratase large subunit from Thioalkalivibrio sulfidiphilus (strain HL-EbGR7).